Consider the following 134-residue polypeptide: D-ribose pyranase (134 aa).

His20 serves as the catalytic Proton donor. Substrate contacts are provided by residues Asp28, His101, and 123 to 125 (YCN).

This sequence belongs to the RbsD / FucU family. RbsD subfamily. As to quaternary structure, homodecamer.

It is found in the cytoplasm. It catalyses the reaction beta-D-ribopyranose = beta-D-ribofuranose. It functions in the pathway carbohydrate metabolism; D-ribose degradation; D-ribose 5-phosphate from beta-D-ribopyranose: step 1/2. Functionally, catalyzes the interconversion of beta-pyran and beta-furan forms of D-ribose. The sequence is that of D-ribose pyranase from Pseudomonas fluorescens (strain Pf0-1).